A 348-amino-acid polypeptide reads, in one-letter code: Alcohol dehydrogenase 2 (348 aa).

Cys-44, His-67, Cys-98, Cys-101, Cys-104, Cys-112, and Cys-154 together coordinate Zn(2+). Residues 178–184 (GAAGGLG), Asp-202, Lys-207, 269–271 (VGL), and Arg-341 each bind NAD(+).

Belongs to the zinc-containing alcohol dehydrogenase family. As to quaternary structure, homotetramer. It depends on Zn(2+) as a cofactor.

It is found in the cytoplasm. It carries out the reaction a primary alcohol + NAD(+) = an aldehyde + NADH + H(+). The enzyme catalyses a secondary alcohol + NAD(+) = a ketone + NADH + H(+). In Candida albicans (strain SC5314 / ATCC MYA-2876) (Yeast), this protein is Alcohol dehydrogenase 2 (ADH2).